A 252-amino-acid chain; its full sequence is tRNA pseudouridine synthase A (252 aa).

D52 serves as the catalytic Nucleophile. Y112 contacts substrate.

Belongs to the tRNA pseudouridine synthase TruA family. Homodimer.

It carries out the reaction uridine(38/39/40) in tRNA = pseudouridine(38/39/40) in tRNA. Its function is as follows. Formation of pseudouridine at positions 38, 39 and 40 in the anticodon stem and loop of transfer RNAs. In Porphyromonas gingivalis (strain ATCC 33277 / DSM 20709 / CIP 103683 / JCM 12257 / NCTC 11834 / 2561), this protein is tRNA pseudouridine synthase A.